Consider the following 179-residue polypeptide: Apolipophorin-3b (179 aa).

The first 16 residues, 1 to 16, serve as a signal peptide directing secretion; it reads MNTLLAVLMLAVAAQA. 12 repeats span residues 30-40, 41-52, 53-60, 61-78, 79-89, 90-99, 100-113, 114-127, 128-140, 141-151, 152-165, and 166-179; these read VQQLNHTIVNA, AHELHETLGLPT, PDEALNLL, TEQA…TTSL, KQEAEKHQGSV, AEQLNRFARN, LNNS…SAQP, ADQL…LTNV, GHQW…RPSV, AQEAWAPVQSA, LQEA…AAAN, and LQNS…KPAN. A glycan (N-linked (GlcNAc...) asparagine) is linked at Asn-34. Asn-101 carries an N-linked (GlcNAc...) asparagine glycan. Positions 152 to 179 are disordered; the sequence is LQEAAEKTKEAAANLQNSIQSAVQKPAN. Positions 165–179 are enriched in polar residues; it reads NLQNSIQSAVQKPAN.

The protein belongs to the insect apolipophorin-3 family. Equilibrium between a soluble monomer and a bound lipoprotein form. Apolipophorin-3 associates with lipophorin during lipid loading until each particle contains 14 molecules of apolipophorin-3 in L.migratoria (5 molecules of apolipophorin-3a and 9 of apolipophorin-3b). In terms of tissue distribution, hemolymph.

It is found in the secreted. Functionally, assists in the loading of diacylglycerol, generated from triacylglycerol stores in the fat body through the action of adipokinetic hormone, into lipophorin, the hemolymph lipoprotein. It increases the lipid carrying capacity of lipophorin by covering the expanding hydrophobic surface resulting from diacylglycerol uptake. It thus plays a critical role in the transport of lipids during flight in several species of insects. In Locusta migratoria (Migratory locust), this protein is Apolipophorin-3b.